The sequence spans 1467 residues: Neuropathy target esterase sws (1467 aa).

Residues 1–34 lie on the Lumenal side of the membrane; the sequence is MDVLEMLRASASGSYNTIFSDAWCQYVSKQITAT. A helical transmembrane segment spans residues 35 to 55; sequence MYMYCAFGLMGVLFLAWFMYF. The Cytoplasmic portion of the chain corresponds to 56–1467; the sequence is KRLARLRLRD…RSSTYNETKN (1412 aa). 174 to 301 lines the a nucleoside 3',5'-cyclic phosphate pocket; sequence IFGHFEKPIF…IRVIQVIMIR (128 aa). 2 disordered regions span residues 332–353 and 372–416; these read TMSG…ANGP and MGMG…SVHG. Residues 339–350 are compositionally biased toward low complexity; that stretch reads SQTSQSSRQATA. Ser450 and Ser459 each carry phosphoserine. Residues 488 to 615 and 604 to 731 each bind a nucleoside 3',5'-cyclic phosphate; these read ELGL…VVRR and IVLD…LSHR. The PNPLA domain occupies 958 to 1124; the sequence is LVLGGGGARG…VNNLPGHLWR (167 aa). The GXGXXG signature appears at 962–967; it reads GGGARG. A GXSXG motif is present at residues 989–993; that stretch reads GVSIG. Ser991 functions as the Nucleophile in the catalytic mechanism. Catalysis depends on Asp1111, which acts as the Proton acceptor. The DGA/G signature appears at 1111–1113; sequence DGG. Ser1205 carries the phosphoserine modification. The disordered stretch occupies residues 1377 to 1467; that stretch reads RKMDKSTQST…RSSTYNETKN (91 aa). Positions 1382 to 1393 are enriched in polar residues; it reads STQSTPPTSSRA. Composition is skewed to basic and acidic residues over residues 1396–1406 and 1448–1458; these read RGKEEARHMDN and LADKDEDKENR.

Belongs to the NTE family. Interacts with Pka-C3; interaction inhibits the catalytic function of Pka-C3 and the esterase activity of sws.

The protein localises to the endoplasmic reticulum membrane. It carries out the reaction a 1-acyl-sn-glycero-3-phosphocholine + H2O = sn-glycerol 3-phosphocholine + a fatty acid + H(+). Its function is as follows. Phospholipase B that deacylates intracellular phosphatidylcholine (PtdCho), generating glycerophosphocholine (GroPtdCho). This deacylation occurs at both sn-2 and sn-1 positions of PtdCho. Its specific chemical modification by certain organophosphorus (OP) compounds leads to distal axonopathy. Plays a role in the signaling mechanism between neurons and glia that regulates glia wrapping during development of the adult brain. Essential for membrane lipid homeostasis and cell survival in both neurons and glia of the adult brain. This chain is Neuropathy target esterase sws, found in Drosophila yakuba (Fruit fly).